The primary structure comprises 174 residues: ATP synthase subunit delta (174 aa).

This sequence belongs to the ATPase delta chain family. As to quaternary structure, F-type ATPases have 2 components, F(1) - the catalytic core - and F(0) - the membrane proton channel. F(1) has five subunits: alpha(3), beta(3), gamma(1), delta(1), epsilon(1). F(0) has three main subunits: a(1), b(2) and c(10-14). The alpha and beta chains form an alternating ring which encloses part of the gamma chain. F(1) is attached to F(0) by a central stalk formed by the gamma and epsilon chains, while a peripheral stalk is formed by the delta and b chains.

It localises to the cell inner membrane. F(1)F(0) ATP synthase produces ATP from ADP in the presence of a proton or sodium gradient. F-type ATPases consist of two structural domains, F(1) containing the extramembraneous catalytic core and F(0) containing the membrane proton channel, linked together by a central stalk and a peripheral stalk. During catalysis, ATP synthesis in the catalytic domain of F(1) is coupled via a rotary mechanism of the central stalk subunits to proton translocation. Its function is as follows. This protein is part of the stalk that links CF(0) to CF(1). It either transmits conformational changes from CF(0) to CF(1) or is implicated in proton conduction. This is ATP synthase subunit delta from Helicobacter hepaticus (strain ATCC 51449 / 3B1).